Here is a 461-residue protein sequence, read N- to C-terminus: Bifunctional protein GlmU (461 aa).

The tract at residues 1–235 is pyrophosphorylase; sequence MKAIILAAGL…ITEIFGVNDR (235 aa). UDP-N-acetyl-alpha-D-glucosamine is bound by residues 6–9, lysine 20, glutamine 71, and 77–78; these read LAAG and GT. Residue aspartate 102 coordinates Mg(2+). Glycine 145, glutamate 160, asparagine 175, and asparagine 233 together coordinate UDP-N-acetyl-alpha-D-glucosamine. Mg(2+) is bound at residue asparagine 233. Residues 236–256 form a linker region; the sequence is WELSFAESVIKMRILENLARS. Residues 257 to 461 form an N-acetyltransferase region; the sequence is GVTIHSPESV…LEDKSKVKDE (205 aa). Arginine 339 and lysine 357 together coordinate UDP-N-acetyl-alpha-D-glucosamine. Histidine 369 acts as the Proton acceptor in catalysis. Residues tyrosine 372 and asparagine 383 each contribute to the UDP-N-acetyl-alpha-D-glucosamine site. Residues alanine 386, serine 411, glycine 429, and arginine 446 each contribute to the acetyl-CoA site.

In the N-terminal section; belongs to the N-acetylglucosamine-1-phosphate uridyltransferase family. It in the C-terminal section; belongs to the transferase hexapeptide repeat family. In terms of assembly, homotrimer. The cofactor is Mg(2+).

Its subcellular location is the cytoplasm. The enzyme catalyses alpha-D-glucosamine 1-phosphate + acetyl-CoA = N-acetyl-alpha-D-glucosamine 1-phosphate + CoA + H(+). It catalyses the reaction N-acetyl-alpha-D-glucosamine 1-phosphate + UTP + H(+) = UDP-N-acetyl-alpha-D-glucosamine + diphosphate. It functions in the pathway nucleotide-sugar biosynthesis; UDP-N-acetyl-alpha-D-glucosamine biosynthesis; N-acetyl-alpha-D-glucosamine 1-phosphate from alpha-D-glucosamine 6-phosphate (route II): step 2/2. Its pathway is nucleotide-sugar biosynthesis; UDP-N-acetyl-alpha-D-glucosamine biosynthesis; UDP-N-acetyl-alpha-D-glucosamine from N-acetyl-alpha-D-glucosamine 1-phosphate: step 1/1. The protein operates within bacterial outer membrane biogenesis; LPS lipid A biosynthesis. Functionally, catalyzes the last two sequential reactions in the de novo biosynthetic pathway for UDP-N-acetylglucosamine (UDP-GlcNAc). The C-terminal domain catalyzes the transfer of acetyl group from acetyl coenzyme A to glucosamine-1-phosphate (GlcN-1-P) to produce N-acetylglucosamine-1-phosphate (GlcNAc-1-P), which is converted into UDP-GlcNAc by the transfer of uridine 5-monophosphate (from uridine 5-triphosphate), a reaction catalyzed by the N-terminal domain. This Hydrogenobaculum sp. (strain Y04AAS1) protein is Bifunctional protein GlmU.